Consider the following 131-residue polypeptide: Profilin-8 (131 aa).

Cysteines 13 and 115 form a disulfide. The Involved in PIP2 interaction motif lies at 81-97 (AVIRGKKGAGGITIKKT). A Phosphothreonine modification is found at Thr-111.

Belongs to the profilin family. As to quaternary structure, occurs in many kinds of cells as a complex with monomeric actin in a 1:1 ratio. Phosphorylated by MAP kinases.

The protein resides in the cytoplasm. Its subcellular location is the cytoskeleton. In terms of biological role, binds to actin and affects the structure of the cytoskeleton. At high concentrations, profilin prevents the polymerization of actin, whereas it enhances it at low concentrations. This Phleum pratense (Common timothy) protein is Profilin-8.